The chain runs to 258 residues: Transcriptional repressor AccR (258 aa).

Positions 6 to 61 (TQDRQAKIVELLRDEQFLAIGRLTEHFQISVATARRDLSELHEAGLLRRTHGGAVS) constitute an HTH deoR-type domain. The segment at residues 23 to 42 (LAIGRLTEHFQISVATARRD) is a DNA-binding region (H-T-H motif).

Its function is as follows. Represses opine catabolism and conjugal transfer of the nopaline Ti plasmid pTiC58. This chain is Transcriptional repressor AccR (accR), found in Agrobacterium fabrum (strain C58 / ATCC 33970) (Agrobacterium tumefaciens (strain C58)).